The sequence spans 515 residues: 1-pyrroline-5-carboxylate dehydrogenase 2 (515 aa).

Active-site residues include glutamate 286 and cysteine 320.

Belongs to the aldehyde dehydrogenase family. RocA subfamily.

It carries out the reaction L-glutamate 5-semialdehyde + NAD(+) + H2O = L-glutamate + NADH + 2 H(+). It functions in the pathway amino-acid degradation; L-proline degradation into L-glutamate; L-glutamate from L-proline: step 2/2. This Halalkalibacterium halodurans (strain ATCC BAA-125 / DSM 18197 / FERM 7344 / JCM 9153 / C-125) (Bacillus halodurans) protein is 1-pyrroline-5-carboxylate dehydrogenase 2 (rocA2).